A 246-amino-acid chain; its full sequence is Cell division protein ZapD (246 aa).

This sequence belongs to the ZapD family. Interacts with FtsZ.

The protein resides in the cytoplasm. Cell division factor that enhances FtsZ-ring assembly. Directly interacts with FtsZ and promotes bundling of FtsZ protofilaments, with a reduction in FtsZ GTPase activity. This is Cell division protein ZapD from Vibrio vulnificus (strain CMCP6).